The sequence spans 628 residues: Choline transporter-like protein 2 (628 aa).

At 1 to 31 (MSSEDLQDHHEIGNEVIKKKGVYTKKKCQDC) the chain is on the cytoplasmic side. The chain crosses the membrane as a helical span at residues 32–52 (FFLILFLLFWAGMIVVAAFGV). Topologically, residues 53–204 (KNGKPDRIVK…EILTDLTNSW (152 aa)) are extracellular. Residues Asn-82, Asn-118, Asn-146, and Asn-168 are each glycosylated (N-linked (GlcNAc...) asparagine). A helical membrane pass occupies residues 205–225 (RYLIYGALIAMGLGLTWIFLL). Residue Arg-226 is a topological domain, cytoplasmic. Residues 227–247 (FFAGFITWLTVFAAYACLGLL) form a helical membrane-spanning segment. The Extracellular portion of the chain corresponds to 248–282 (TAQVYFQWQDSKDAYENTIPSQRLVMQEKNILALK). A helical transmembrane segment spans residues 283–303 (VIFIILCVVCGIFALILLALF). Residues 304–319 (SRIRIAIRIIKECSRA) lie on the Cytoplasmic side of the membrane. The chain crosses the membrane as a helical span at residues 320–340 (IGIMPSIFFFPIFIFLLLCGF). Residues 341–381 (TVYWVYIGVYLATAGSPTYDDQYRFTGYEADSKLQKIQIYH) are Extracellular-facing. A helical membrane pass occupies residues 382 to 402 (FFGYLWTFAFILALNQTTIAG). Residues 403 to 432 (AISSWYWVQDKKDTPFFPVWSSFFRVIRYH) are Cytoplasmic-facing. A helical transmembrane segment spans residues 433 to 453 (LGSIALGSLILAIVQFIRWVL). At 454–530 (RFLEKKFKGK…RVAAVNLVSS (77 aa)) the chain is on the extracellular side. A helical transmembrane segment spans residues 531-551 (FLMFLGRVFITAATVGISLYL). Residues 552-559 (LKEHENLS) are Cytoplasmic-facing. A helical transmembrane segment spans residues 560–580 (FYIIPVILIGFIAFAISTGFM). Residues 581–628 (SVYDMSIDTMLLCFCEDCERNDGSPERPYYMSKSLRKFVDGKGRSKCC) are Extracellular-facing.

It belongs to the CTL (choline transporter-like) family.

It is found in the cell membrane. Its subcellular location is the mitochondrion outer membrane. The enzyme catalyses choline(out) + n H(+)(in) = choline(in) + n H(+)(out). The catalysed reaction is ethanolamine(out) + n H(+)(in) = ethanolamine(in) + n H(+)(out). Functionally, choline/H+ antiporter, mainly in mitochodria. Also acts as a low-affinity ethanolamine/H+ antiporter, regulating the supply of extracellular ethanolamine (Etn) for the CDP-Etn pathway, redistribute intracellular Etn and balance the CDP-Cho and CDP-Etn arms of the Kennedy pathway. This is Choline transporter-like protein 2 (slc44a2) from Dictyostelium discoideum (Social amoeba).